A 531-amino-acid polypeptide reads, in one-letter code: Protein tweety homolog 2-like (531 aa).

Over 1–44 (MASSRQDYIAPWWTYWLHNFPHLNFNFQTVDNTFKPEDASYQQS) the chain is Extracellular. The helical transmembrane segment at 45 to 65 (LVFLACVSAVALGLCLLLLSV) threads the bilayer. At 66 to 87 (YLTCLCCCRREEDEEVKRPDTC) the chain is on the cytoplasmic side. The chain crosses the membrane as a helical span at residues 88–108 (CVTWAAVITGLVICSAVGVGF). At 109 to 213 (YGNSETNDGV…RTAFIEYYRW (105 aa)) the chain is on the extracellular side. Asn-129 is a glycosylation site (N-linked (GlcNAc...) asparagine). A helical transmembrane segment spans residues 214–234 (LTYLLLLILDLVICLLACLAL). Topologically, residues 235–239 (AKQSR) are cytoplasmic. A helical transmembrane segment spans residues 240–260 (WLLTVIMVCGMLTLIMSWASL). Over 261-389 (GAGTATAVGT…GVCYDGVEGL (129 aa)) the chain is Extracellular. N-linked (GlcNAc...) asparagine glycans are attached at residues Asn-283 and Asn-352. The chain crosses the membrane as a helical span at residues 390-410 (LYLCLFSLLAACAFCALLCAV). Over 411–531 (PRAWMLIAIR…IRHFGTDFQV (121 aa)) the chain is Cytoplasmic.

Belongs to the tweety family.

Its subcellular location is the cell membrane. Functionally, probable large-conductance Ca(2+)-activated chloride channel. The chain is Protein tweety homolog 2-like (ttyh2l) from Danio rerio (Zebrafish).